Reading from the N-terminus, the 157-residue chain is Epithelial membrane protein 1 (157 aa).

Residues Met-1–Val-21 form a helical membrane-spanning segment. N-linked (GlcNAc...) asparagine glycosylation is found at Asn-43 and Asn-46. A run of 3 helical transmembrane segments spans residues Phe-67–Phe-87, Phe-95–Ile-115, and Tyr-134–Leu-154.

This sequence belongs to the PMP-22/EMP/MP20 family.

The protein resides in the membrane. The chain is Epithelial membrane protein 1 (EMP1) from Homo sapiens (Human).